Reading from the N-terminus, the 61-residue chain is Protein translocase subunit SecE (61 aa).

Residues 1–34 lie on the Cytoplasmic side of the membrane; sequence MAELQERIRHFWKESRRAFLVTKKPNWATYKRAA. The helical transmembrane segment at 35 to 55 threads the bilayer; that stretch reads KITGLGIILIGLIGMLIRIVG. The Extracellular segment spans residues 56-61; sequence ILILGG.

Belongs to the SecE/SEC61-gamma family. Component of the Sec protein translocase complex. Heterotrimer consisting of alpha (SecY), beta (SecG) and gamma (SecE) subunits. The heterotrimers can form oligomers, although 1 heterotrimer is thought to be able to translocate proteins. Interacts with the ribosome. May interact with SecDF, and other proteins may be involved.

Its subcellular location is the cell membrane. Essential subunit of the protein translocation channel SecYEG. Clamps together the 2 halves of SecY. May contact the channel plug during translocation. In Pyrococcus furiosus (strain ATCC 43587 / DSM 3638 / JCM 8422 / Vc1), this protein is Protein translocase subunit SecE.